A 493-amino-acid chain; its full sequence is NAD(P)H dehydrogenase (quinone) (493 aa).

Residues 12–13 (PA), 35–37 (DCD), 42–43 (AA), Lys52, Gly117, Asp317, 324–325 (LA), and Tyr450 contribute to the FAD site.

Belongs to the class-I pyridine nucleotide-disulfide oxidoreductase family. Homotetramer. FAD is required as a cofactor.

It catalyses the reaction a quinone + NADH + H(+) = a quinol + NAD(+). The enzyme catalyses a quinone + NADPH + H(+) = a quinol + NADP(+). Functionally, may contribute to virulence by increasing resistance to reactive oxygen intermediates. It can reduce 2,6-dimethyl-1,4-benzoquinone (DMBQ), 5-hydroxy-1,4-naphthaquinone (5-HNQ) and menadione. In Mycobacterium tuberculosis (strain CDC 1551 / Oshkosh), this protein is NAD(P)H dehydrogenase (quinone) (lpdA).